We begin with the raw amino-acid sequence, 224 residues long: Flagellar L-ring protein (224 aa).

The first 15 residues, 1-15 (MRSLLFSLTALVLAG), serve as a signal peptide directing secretion. Cys-16 carries the N-palmitoyl cysteine lipid modification. Cys-16 carries the S-diacylglycerol cysteine lipid modification.

It belongs to the FlgH family. The basal body constitutes a major portion of the flagellar organelle and consists of four rings (L,P,S, and M) mounted on a central rod.

Its subcellular location is the cell outer membrane. It localises to the bacterial flagellum basal body. Functionally, assembles around the rod to form the L-ring and probably protects the motor/basal body from shearing forces during rotation. The sequence is that of Flagellar L-ring protein from Idiomarina loihiensis (strain ATCC BAA-735 / DSM 15497 / L2-TR).